We begin with the raw amino-acid sequence, 527 residues long: CTP synthase (527 aa).

The amidoligase domain stretch occupies residues methionine 1–leucine 270. Residue serine 12 coordinates CTP. Residue serine 12 participates in UTP binding. Residues glycine 13–isoleucine 18 and aspartate 70 contribute to the ATP site. Residues aspartate 70 and glutamate 145 each coordinate Mg(2+). CTP is bound by residues aspartate 152–glutamate 154, lysine 191–glutamine 196, and lysine 227. UTP is bound by residues lysine 191–glutamine 196 and lysine 227. The Glutamine amidotransferase type-1 domain occupies threonine 292–lysine 525. An L-glutamine-binding site is contributed by glycine 349. Cysteine 376 serves as the catalytic Nucleophile; for glutamine hydrolysis. L-glutamine-binding positions include leucine 377 to glutamine 380, glutamate 400, and arginine 455. Catalysis depends on residues histidine 498 and glutamate 500.

The protein belongs to the CTP synthase family. As to quaternary structure, homotetramer.

It carries out the reaction UTP + L-glutamine + ATP + H2O = CTP + L-glutamate + ADP + phosphate + 2 H(+). The catalysed reaction is L-glutamine + H2O = L-glutamate + NH4(+). It catalyses the reaction UTP + NH4(+) + ATP = CTP + ADP + phosphate + 2 H(+). It participates in pyrimidine metabolism; CTP biosynthesis via de novo pathway; CTP from UDP: step 2/2. With respect to regulation, allosterically activated by GTP, when glutamine is the substrate; GTP has no effect on the reaction when ammonia is the substrate. The allosteric effector GTP functions by stabilizing the protein conformation that binds the tetrahedral intermediate(s) formed during glutamine hydrolysis. Inhibited by the product CTP, via allosteric rather than competitive inhibition. In terms of biological role, catalyzes the ATP-dependent amination of UTP to CTP with either L-glutamine or ammonia as the source of nitrogen. Regulates intracellular CTP levels through interactions with the four ribonucleotide triphosphates. In Methanospirillum hungatei JF-1 (strain ATCC 27890 / DSM 864 / NBRC 100397 / JF-1), this protein is CTP synthase.